Reading from the N-terminus, the 103-residue chain is Large ribosomal subunit protein bL21 (103 aa).

Belongs to the bacterial ribosomal protein bL21 family. As to quaternary structure, part of the 50S ribosomal subunit. Contacts protein L20.

Functionally, this protein binds to 23S rRNA in the presence of protein L20. This is Large ribosomal subunit protein bL21 from Escherichia coli O127:H6 (strain E2348/69 / EPEC).